The sequence spans 349 residues: Thioredoxin-related transmembrane protein 4 (349 aa).

Positions 1 to 23 (MAGGRCGPQLTALLAAWIAAVAA) are cleaved as a signal peptide. Residues 30 to 137 (AALPPEQSRV…FEDLQNYILE (108 aa)) form the Thioredoxin domain. Catalysis depends on nucleophile residues C64 and C67. C64 and C67 are oxidised to a cystine. Residues 190–210 (VFFVIATLVFGLFMGLVLVVI) form a helical membrane-spanning segment. Over residues 225 to 240 (RSEQNRRSEEAHRAEQ) the composition is skewed to basic and acidic residues. Residues 225–349 (RSEQNRRSEE…RKSQHADKGL (125 aa)) are disordered. Acidic residues-rich tracts occupy residues 242–284 (QDAE…EEDN) and 312–321 (VEPEEAEEGI). Residues S251 and S259 each carry the phosphoserine modification. A compositionally biased stretch (basic and acidic residues) spans 335–349 (DSLRQRKSQHADKGL).

It is found in the nucleus inner membrane. The protein resides in the endoplasmic reticulum membrane. This Homo sapiens (Human) protein is Thioredoxin-related transmembrane protein 4 (TMX4).